The sequence spans 142 residues: Augurin-A (142 aa).

The first 28 residues, methionine 1–glutamate 28, serve as a signal peptide directing secretion. 2 consecutive propeptides follow at residues serine 29–proline 66 and glycine 127–tyrosine 142.

The protein belongs to the augurin family.

The protein localises to the secreted. It localises to the cytoplasm. Its subcellular location is the apical cell membrane. Probable hormone. Required for the proper formation of the central nervous system by attenuating cell proliferation during development. The sequence is that of Augurin-A from Danio rerio (Zebrafish).